The following is a 4328-amino-acid chain: Cadherin-4 (4328 aa).

Residues 1–23 (MKKHRVFHLFLLIFCKAISLVTT) form the signal peptide. The Extracellular portion of the chain corresponds to 24–4072 (SSSTEQIFEF…TVLEFLLKAE (4049 aa)). 2 N-linked (GlcNAc...) asparagine glycosylation sites follow: Asn39 and Asn56. 2 Cadherin domains span residues 108-153 (PLNR…SPVF) and 156-275 (GEQG…NPNI). Residues Asn196, Asn330, Asn339, Asn365, Asn431, Asn452, and Asn584 are each glycosylated (N-linked (GlcNAc...) asparagine). 11 consecutive Cadherin domains span residues 384-492 (DNEK…APVF), 507-608 (PGDV…SPVF), 609-720 (SSFP…SPQF), 721-826 (DEVS…PPKC), 827-934 (VVQH…AIEF), 935-1051 (DDVA…KPMY), 1047-1156 (KKPM…SPTF), 1175-1262 (RIFA…PPEI), 1265-1363 (KKSD…RPKF), 1364-1467 (SASH…SPYF), and 1476-1570 (VDES…APET). Asn811 and Asn899 each carry an N-linked (GlcNAc...) asparagine glycan. The Cell attachment site motif lies at 1090–1092 (RGD). A glycan (N-linked (GlcNAc...) asparagine) is linked at Asn1192. The segment at 1246–1267 (NSAGQKPRKSKNSPPEISGKKS) is disordered. Asn1335 carries N-linked (GlcNAc...) asparagine glycosylation. The N-linked (GlcNAc...) asparagine glycan is linked to Asn1610. The 114-residue stretch at 1671–1784 (RRQVYRGTIR…IDENDEPPRF (114 aa)) folds into the Cadherin 14 domain. The N-linked (GlcNAc...) asparagine glycan is linked to Asn1895. A Cadherin 15 domain is found at 1917 to 1984 (FSIVNPHEAF…ENINDETPIF (68 aa)). Residues Asn2059, Asn2150, Asn2216, Asn2367, Asn2413, Asn2440, and Asn2535 are each glycosylated (N-linked (GlcNAc...) asparagine). 2 Cadherin domains span residues 2187-2285 (EKLK…MPEF) and 2286-2397 (IRSD…PPRF). Cadherin domains follow at residues 2429–2505 (LQFS…PPFF), 2506–2608 (VLPF…VPRF), 2609–2712 (SNSH…APAF), 2719–2813 (FTIS…PPQF), 2828–2915 (SPIL…CPEA), 2913–3011 (PEAN…RPKI), 3012–3113 (IEKL…APTF), 3114–3216 (EKST…APKF), and 3217–3326 (EKEK…APTF). N-linked (GlcNAc...) asparagine glycosylation is found at Asn2844, Asn2916, Asn2941, Asn3083, and Asn3143. Asn3330 carries N-linked (GlcNAc...) asparagine glycosylation. Cadherin domains are found at residues 3335 to 3428 (VQEG…APTM) and 3429 to 3554 (KPMK…VDEF). The N-linked (GlcNAc...) asparagine glycan is linked to Asn3512. The EGF-like 1 domain maps to 3706 to 3744 (ETNQCAKSPCEQWQLCIPSVHNSTYECVCPLGMEGDKCS). Cystine bridges form between Cys3710-Cys3721, Cys3715-Cys3732, Cys3734-Cys3743, Cys3898-Cys3925, Cys3933-Cys3944, Cys3938-Cys3954, Cys3956-Cys3965, Cys3972-Cys3983, Cys3977-Cys3992, and Cys3994-Cys4003. Asn3727 is a glycosylation site (N-linked (GlcNAc...) asparagine). The 169-residue stretch at 3757 to 3925 (EAELSVGGDG…MKLFGAQPGC (169 aa)) folds into the Laminin G-like domain. EGF-like domains are found at residues 3929–3966 (TSSP…NVCE) and 3968–4004 (DLEP…KHCE). N-linked (GlcNAc...) asparagine glycosylation occurs at Asn4043. Residues 4073–4093 (IVIVILGVLLLLLVFCLTFIT) traverse the membrane as a helical segment. Over 4094-4328 (WKCCKKNRDP…IDEEVNIHIS (235 aa)) the chain is Cytoplasmic. Disordered stretches follow at residues 4143-4215 (TSSV…SSLR) and 4268-4311 (NFER…PISL). The span at 4178-4196 (TRRDPLPSDKFRRVDETAN) shows a compositional bias: basic and acidic residues. The Cell attachment site motif lies at 4207 to 4209 (RGD).

In terms of tissue distribution, in larvae and adult, it is expressed in various tissues including pharyngeal muscle, hypodermis and gonad. In the nervous system it is expressed in sensory neurons and motor neurons in the ventral cord.

It is found in the cell membrane. Potential calcium-dependent cell-adhesion protein that controls axon guidance in the ventral cord. This Caenorhabditis elegans protein is Cadherin-4.